Here is a 757-residue protein sequence, read N- to C-terminus: RNA cytosine C(5)-methyltransferase NSUN2 (757 aa).

Residues 1–35 (MGRRARGRRFQQPPQPEGEEDASDGGRKRGQAGWE) form a disordered region. Phosphoserine is present on Ser23. Residue Lys46 forms a Glycyl lysine isopeptide (Lys-Gly) (interchain with G-Cter in SUMO2) linkage. Phosphoserine; by AURKB is present on Ser139. S-adenosyl-L-methionine contacts are provided by residues 184-190 (CAAPGSK), Asp215, Asp242, and Asp268. Cys321 serves as the catalytic Nucleophile. The segment at 436-504 (NKRQPKVQNK…EKKDGVCGPP (69 aa)) is disordered. Phosphoserine is present on residues Ser456 and Ser473. Over residues 463–476 (GNPSDQSELESQMI) the composition is skewed to polar residues. Residues Lys510 and Lys515 each participate in a glycyl lysine isopeptide (Lys-Gly) (interchain with G-Cter in SUMO2) cross-link. At Lys585 the chain carries N6-acetyllysine; alternate. Lys585 bears the N6-malonyllysine; alternate mark. A Glycyl lysine isopeptide (Lys-Gly) (interchain with G-Cter in SUMO2); alternate cross-link involves residue Lys585. The residue at position 592 (Ser592) is a Phosphoserine. Residues Lys639, Lys653, and Lys659 each participate in a glycyl lysine isopeptide (Lys-Gly) (interchain with G-Cter in SUMO2) cross-link. Residues 716–757 (LTNENAASPEQPGDEDAKQTAQDPCVPDSVPGCDAAAAEPSR) form a disordered region. Phosphothreonine is present on Thr717. Ser723 carries the phosphoserine modification.

This sequence belongs to the class I-like SAM-binding methyltransferase superfamily. RsmB/NOP family. TRM4 subfamily. Interacts with NPM1 and NCL during interphase; interaction is disrupted following phosphorylation at Ser-139. Post-translationally, phosphorylated at Ser-139 by AURKB during mitosis, leading to abolish methyltransferase activity and the interaction with NPM1. In terms of tissue distribution, ubiquitously expressed at low level. Up-regulated in tumors. Dynamically expressed during morphogenesis and in adult skin: in adult skin, expression is up-regulated in the bulge and hair germ as soon as the hair follicle enters its growing phase (anagen). During anagen, expressed at highest level in cells of the hair germ that give rise to the hair matrix.

It is found in the nucleus. Its subcellular location is the nucleolus. The protein resides in the cytoplasm. The protein localises to the mitochondrion. It localises to the cytoskeleton. It is found in the spindle. Its subcellular location is the secreted. The protein resides in the extracellular exosome. The enzyme catalyses cytidine(48) in tRNA + S-adenosyl-L-methionine = 5-methylcytidine(48) in tRNA + S-adenosyl-L-homocysteine + H(+). The catalysed reaction is cytidine(49) in tRNA + S-adenosyl-L-methionine = 5-methylcytidine(49) in tRNA + S-adenosyl-L-homocysteine + H(+). It carries out the reaction cytidine(50) in tRNA + S-adenosyl-L-methionine = 5-methylcytidine(50) in tRNA + S-adenosyl-L-homocysteine + H(+). It catalyses the reaction cytidine(34) in tRNA precursor + S-adenosyl-L-methionine = 5-methylcytidine(34) in tRNA precursor + S-adenosyl-L-homocysteine + H(+). The enzyme catalyses a cytidine in mRNA + S-adenosyl-L-methionine = a 5-methylcytidine in mRNA + S-adenosyl-L-homocysteine + H(+). Its activity is regulated as follows. Inhibited by magnesium ions. Its function is as follows. RNA cytosine C(5)-methyltransferase that methylates cytosine to 5-methylcytosine (m5C) in various RNAs, such as tRNAs, mRNAs and some long non-coding RNAs (lncRNAs). Involved in various processes, such as epidermal stem cell differentiation, testis differentiation and maternal to zygotic transition during early development: acts by increasing protein synthesis; cytosine C(5)-methylation promoting tRNA stability and preventing mRNA decay. Methylates cytosine to 5-methylcytosine (m5C) at positions 34 and 48 of intron-containing tRNA(Leu)(CAA) precursors, and at positions 48, 49 and 50 of tRNA(Gly)(GCC) precursors. tRNA methylation is required generation of RNA fragments derived from tRNAs (tRFs). Also mediates C(5)-methylation of mitochondrial tRNAs. Catalyzes cytosine C(5)-methylation of mRNAs, leading to stabilize them and prevent mRNA decay: mRNA stabilization involves YBX1 that specifically recognizes and binds m5C-modified transcripts. Cytosine C(5)-methylation of mRNAs also regulates mRNA export: methylated transcripts are specifically recognized by THOC4/ALYREF, which mediates mRNA nucleo-cytoplasmic shuttling. Also mediates cytosine C(5)-methylation of non-coding RNAs, such as vault RNAs (vtRNAs), promoting their processing into regulatory small RNAs. Cytosine C(5)-methylation of vtRNA VTRNA1.1 promotes its processing into small-vault RNA4 (svRNA4) and regulates epidermal differentiation. May act downstream of Myc to regulate epidermal cell growth and proliferation. Required for proper spindle assembly and chromosome segregation, independently of its methyltransferase activity. This Mus musculus (Mouse) protein is RNA cytosine C(5)-methyltransferase NSUN2.